Reading from the N-terminus, the 636-residue chain is Methyl-CpG-binding domain protein 1 (636 aa).

An MBD domain is found at 1 to 69; the sequence is MAESWQDCPA…TLFDFRQGTL (69 aa). Positions 75–113 are disordered; it reads KTHPLAVPSKKKKKPSKPAKTKKQQVGLQRSEVRIETPQ. Residues 83–97 show a composition bias toward basic residues; sequence SKKKKKPSKPAKTKK. Positions 84–88 match the Nuclear localization signal motif; the sequence is KKKKK. Lysine 117 participates in a covalent cross-link: Glycyl lysine isopeptide (Lys-Gly) (interchain with G-Cter in SUMO2). 2 consecutive CXXC-type zinc fingers follow at residues 187 to 234 and 235 to 281; these read RMFK…RRCL and RIME…RRCF. Cysteine 194, cysteine 197, cysteine 200, cysteine 206, cysteine 209, cysteine 212, cysteine 228, cysteine 233, cysteine 243, cysteine 246, cysteine 249, cysteine 255, cysteine 258, cysteine 261, cysteine 275, and cysteine 280 together coordinate Zn(2+). A disordered region spans residues 291-314; the sequence is GSKVASQRHSQAPPLPPHPASQYT. Lysine 293 participates in a covalent cross-link: Glycyl lysine isopeptide (Lys-Gly) (interchain with G-Cter in SUMO2). A CXXC-type 3 zinc finger spans residues 348-396; sequence TNQRQNRKCGACAACLRRMDCGRCDFCCDKPKFGGGNQKRQKCRWRQCL. 8 residues coordinate Zn(2+): cysteine 356, cysteine 359, cysteine 362, cysteine 368, cysteine 371, cysteine 374, cysteine 390, and cysteine 395. The segment at 407–474 is disordered; the sequence is AGSGSGEGAG…GRGSVLPQPD (68 aa). Serine 409 bears the Phosphoserine mark. Glycyl lysine isopeptide (Lys-Gly) (interchain with G-Cter in SUMO2) cross-links involve residues lysine 443 and lysine 461. Residues lysine 520 and lysine 559 each participate in a glycyl lysine isopeptide (Lys-Gly) (interchain with G-Cter in SUMO2); alternate cross-link. Positions 543 to 589 are disordered; the sequence is QSGFPSKAADPDLSPVKQEPPGPEEDGEEKKDDVSETTPAEEIGGVG. Residues 550–612 are transcriptional repression domain (TRD); it reads AADPDLSPVK…RLRDAEAWLP (63 aa).

As to quaternary structure, interacts with OASL, ATF7IP, ATF7IP2 and BAHD1. Binds CHAF1A and the SUV39H1-CBX5 complex via the MBD domain. Binds MGP via the TRD domain. May be part of the MeCP1 complex. During DNA replication, it recruits SETDB1 to form a S phase-specific complex that facilitates methylation of H3 'Lys-9' during replication-coupled chromatin assembly and is at least composed of the CAF-1 subunit CHAF1A, MBD1 and SETDB1. Interacts with the Ten-1 ICD form of TENM1. In terms of processing, sumoylated, sumoylation may increase interaction with ATF7IP. In terms of tissue distribution, highly expressed in kidney, liver and brain. Detected at lower levels in heart, lung, skeletal muscle, spleen and testis.

It localises to the nucleus. The protein localises to the nucleus matrix. Its subcellular location is the nucleus speckle. It is found in the chromosome. Its function is as follows. Transcriptional repressor that binds CpG islands in promoters where the DNA is methylated at position 5 of cytosine within CpG dinucleotides. Binding is abolished by the presence of 7-mG that is produced by DNA damage by methylmethanesulfonate (MMS). Acts as transcriptional repressor and plays a role in gene silencing by recruiting ATF7IP, which in turn recruits factors such as the histone methyltransferase SETDB1. Probably forms a complex with SETDB1 and ATF7IP that represses transcription and couples DNA methylation and histone 'Lys-9' trimethylation. Isoform 1 can also repress transcription from unmethylated promoters. The protein is Methyl-CpG-binding domain protein 1 of Mus musculus (Mouse).